The chain runs to 587 residues: MSAINHLCLKLILASFAIINTITALTNDGTGHLEFLLQHEEEMYYATTLDIGTPSQSLTVLFDTGSADFWVMDSSNPFCLPNSNTSSYSNATYNGEEVKPSIDCRSMSTYNEHRSSTYQYLENGRFYITYADGTFADGSWGTETVSINGIDIPNIQFGVAKYATTPVSGVLGIGFPRRESVKGYEGAPNEYYPNFPQILKSEKIIDVVAYSLFLNSPDSGTGSIVFGAIDESKFSGDLFTFPMVNEYPTIVDAPATLAMTIQGLGAQNKSSCEHETFTTTKYPVLLDSGTSLLNAPKVIADKMASFVNASYSEEEGIYILDCPVSVGDVEYNFDFGDLQISVPLSSLILSPETEGSYCGFAVQPTNDSMVLGDVFLSSAYVVFDLDNYKISLAQANWNASEVSKKLVNIQTDGSISGAKIATAEPWSTNEPFTVTSDIYSSTGCKSRPFLQSSTASSLIAETNVQSRNCSTKMPGTRSTTVLSKPTQNSAMHQSTGAVTQTSNETKLELSSTMANSGSVSLPTSNSIDKEFEHSKSQTTSDPSVAEHSTFNQTFVHETKYRPTHKTVITETVTKYSTVLINVCKPTY.

Positions 1 to 24 (MSAINHLCLKLILASFAIINTITA) are cleaved as a signal peptide. The Peptidase A1 domain occupies 45–393 (YATTLDIGTP…DLDNYKISLA (349 aa)). Residue D63 is part of the active site. Residues N84, N90, and N268 are each glycosylated (N-linked (GlcNAc...) asparagine). D287 is an active-site residue. The N-linked (GlcNAc...) asparagine glycan is linked to N308. A disulfide bridge links C322 with C358. 5 N-linked (GlcNAc...) asparagine glycosylation sites follow: N366, N398, N468, N503, and N551. Positions 466–505 (SRNCSTKMPGTRSTTVLSKPTQNSAMHQSTGAVTQTSNET) are disordered.

The protein belongs to the peptidase A1 family.

The protein resides in the secreted. The enzyme catalyses Selective cleavage of 6-Leu-|-Lys-7 bond in the pheromone alpha-mating factor.. Its function is as follows. This protein called 'barrier activity' is excreted by yeast cells mating type a. It is probably a protease that cleaves alpha-factor and thus acts as an antagonist of this mating pheromone and establishes optimal pheromone concentration for conjugation. This is Barrierpepsin (BAR1) from Saccharomyces cerevisiae (strain ATCC 204508 / S288c) (Baker's yeast).